We begin with the raw amino-acid sequence, 367 residues long: Undecaprenyl-phosphate alpha-N-acetylglucosaminyl 1-phosphate transferase (367 aa).

9 helical membrane-spanning segments follow: residues 3 to 23 (LLTA…FIFL), 45 to 65 (GVIP…MFGL), 69 to 89 (YIPH…VGAM), 129 to 149 (WELV…WAAI), 158 to 178 (IDGL…LILW), 187 to 207 (MWCF…LGIL), 213 to 233 (VFMG…LLLE), 242 to 262 (ISPV…VAIM), and 318 to 338 (VPEW…GYCI).

It belongs to the glycosyltransferase 4 family. WecA subfamily. The cofactor is Mg(2+). Mn(2+) serves as cofactor.

Its subcellular location is the cell inner membrane. The enzyme catalyses di-trans,octa-cis-undecaprenyl phosphate + UDP-N-acetyl-alpha-D-glucosamine = N-acetyl-alpha-D-glucosaminyl-di-trans,octa-cis-undecaprenyl diphosphate + UMP. Its pathway is bacterial outer membrane biogenesis; LPS O-antigen biosynthesis. The protein operates within bacterial outer membrane biogenesis; enterobacterial common antigen biosynthesis. Catalyzes the transfer of the GlcNAc-1-phosphate moiety from UDP-GlcNAc onto the carrier lipid undecaprenyl phosphate (C55-P), yielding GlcNAc-pyrophosphoryl-undecaprenyl (GlcNAc-PP-C55). The protein is Undecaprenyl-phosphate alpha-N-acetylglucosaminyl 1-phosphate transferase of Salmonella typhi.